The sequence spans 240 residues: MILLRHGESVWNLENRFTGWTDVDLSANGVEEARLAGKILKNEGYQFDKAYTSVLKRAIRTLWIVEEMMDLVWLPVEKRWELNERHYGNLQGLNKAEMAKQYGAELVHQWRRGYGIEPPPLDNSDPRHPRFDRRYAGLAPEALPASESLKKTLKRVIPCWKQHILPDIAAGKELIIVAHGNSLRALYKHLEGLSDQEVMELNIPTGIPLVFELDSAFRPTAHYYLADSEKSQVVIGDTAH.

Substrate is bound by residues 5–12 (RHGESVWN), 18–19 (TG), Arg57, 84–87 (ERHY), Lys95, 111–112 (RR), and 180–181 (GN). His6 (tele-phosphohistidine intermediate) is an active-site residue. Catalysis depends on Glu84, which acts as the Proton donor/acceptor.

Belongs to the phosphoglycerate mutase family. BPG-dependent PGAM subfamily. As to quaternary structure, homodimer.

It catalyses the reaction (2R)-2-phosphoglycerate = (2R)-3-phosphoglycerate. The protein operates within carbohydrate degradation; glycolysis; pyruvate from D-glyceraldehyde 3-phosphate: step 3/5. Functionally, catalyzes the interconversion of 2-phosphoglycerate and 3-phosphoglycerate. The protein is 2,3-bisphosphoglycerate-dependent phosphoglycerate mutase of Nitrosococcus oceani (strain ATCC 19707 / BCRC 17464 / JCM 30415 / NCIMB 11848 / C-107).